The chain runs to 273 residues: Non-homologous end joining protein Ku (273 aa).

The region spanning 10-193 (AFGLVNVPVK…KVEIKPAELK (184 aa)) is the Ku domain. Positions 111-273 (FLEPDSKSSK…KANSNVPTPP (163 aa)) are sufficient for interaction with LigD.

Belongs to the prokaryotic Ku family. In terms of assembly, homodimer. Interacts with LigD.

In terms of biological role, with LigD forms a non-homologous end joining (NHEJ) DNA repair enzyme, which repairs dsDNA breaks with reduced fidelity. Binds linear dsDNA with 5'- and 3'- overhangs but not closed circular dsDNA nor ssDNA. Recruits and stimulates the ligase activity of LigD. The chain is Non-homologous end joining protein Ku (mku) from Mycobacterium tuberculosis (strain CDC 1551 / Oshkosh).